Consider the following 458-residue polypeptide: F-box/FBD/LRR-repeat protein At1g78750 (458 aa).

Residues 17-67 enclose the F-box domain; that stretch reads VDWISNLPETLLCQVLFYLPTKDVVKSSVLSSRWRNLWKYVPGFNLSYCDF. LRR repeat units lie at residues 152 to 183, 184 to 209, 231 to 258, 302 to 327, and 345 to 370; these read CETL…HLSI, VKFA…NINR, VADT…RLSD, DFLV…YDYS, and FYGY…VVGS. The FBD domain occupies 376-428; that stretch reads KEGINILSVPRGFLSSLEYVKIERPLKGEAMEMKLVSYLLENSTILKKLTLCL.

This is F-box/FBD/LRR-repeat protein At1g78750 from Arabidopsis thaliana (Mouse-ear cress).